The following is a 1255-amino-acid chain: Stress response protein NST1 (1255 aa).

The span at 1–19 shows a compositional bias: pro residues; that stretch reads MKGNRNPPPPPSGPVPPSP. Disordered regions lie at residues 1 to 214, 285 to 379, 470 to 525, 563 to 898, and 956 to 1080; these read MKGN…SQEE, NHPN…SEEL, RAYD…RMEE, EAEN…PPMG, and HPPP…PPFG. Over residues 50–61 the composition is skewed to low complexity; it reads PSPTASSLAAKP. Basic residues predominate over residues 76–86; sequence NRKKQKRRAKA. The segment covering 87–96 has biased composition (low complexity); the sequence is AAKAAAERAQ. Acidic residues predominate over residues 118–127; the sequence is ADPEDDEDEP. A compositionally biased stretch (basic residues) spans 151–162; the sequence is KSKKSKKKKKKN. Residues 187-196 are compositionally biased toward pro residues; the sequence is PILPPPPPQQ. Residues 201 to 214 are compositionally biased toward basic and acidic residues; the sequence is MSREKIWNTNSQEE. Residues 330–376 are compositionally biased toward acidic residues; that stretch reads ELEGDEEEEEVEAEAEDDGEGDEEGEDVYSEDELEDDMYSEEEQEPS. Over residues 470-481 the composition is skewed to basic and acidic residues; sequence RAYDHPNGERYV. Positions 488–518 are enriched in acidic residues; it reads PDEEEFEDEEEEYEEDDEEEYNSPDEEDTMT. The stretch at 547–745 forms a coiled coil; the sequence is REKVAKERQA…ERRKKEERAA (199 aa). Basic and acidic residues-rich tracts occupy residues 590–630 and 637–745; these read KKEA…AEEK and QRKA…ERAA. Pro residues predominate over residues 770 to 780; that stretch reads PPAPPVAPVPV. The segment covering 811–835 has biased composition (low complexity); the sequence is QTSQQDGSTASSGAASNSGSMASQN. Composition is skewed to polar residues over residues 865–877 and 983–1004; these read QGSAQPPSHSASP and RDNQSPHSRQGSGSFDPSQPIS. Residues 1067-1080 are compositionally biased toward pro residues; it reads GPRPAPGFPMPPFG.

This sequence belongs to the NST1 family.

It is found in the cytoplasm. In terms of biological role, may act as a negative regulator of salt tolerance. The protein is Stress response protein NST1 (NST1) of Chaetomium globosum (strain ATCC 6205 / CBS 148.51 / DSM 1962 / NBRC 6347 / NRRL 1970) (Soil fungus).